Here is a 334-residue protein sequence, read N- to C-terminus: Fructose-1,6-bisphosphatase class 1 (334 aa).

The Mg(2+) site is built by Glu91, Asp113, Leu115, and Asp116. Substrate is bound by residues 116 to 119, Asn208, and Lys274; that span reads DGSS. Position 280 (Glu280) interacts with Mg(2+).

The protein belongs to the FBPase class 1 family. In terms of assembly, homotetramer. Requires Mg(2+) as cofactor.

It localises to the cytoplasm. It catalyses the reaction beta-D-fructose 1,6-bisphosphate + H2O = beta-D-fructose 6-phosphate + phosphate. Its pathway is carbohydrate biosynthesis; gluconeogenesis. The chain is Fructose-1,6-bisphosphatase class 1 from Herminiimonas arsenicoxydans.